The following is a 280-amino-acid chain: 2-dehydro-3-deoxyphosphooctonate aldolase (280 aa).

The protein belongs to the KdsA family.

The protein localises to the cytoplasm. It catalyses the reaction D-arabinose 5-phosphate + phosphoenolpyruvate + H2O = 3-deoxy-alpha-D-manno-2-octulosonate-8-phosphate + phosphate. It participates in carbohydrate biosynthesis; 3-deoxy-D-manno-octulosonate biosynthesis; 3-deoxy-D-manno-octulosonate from D-ribulose 5-phosphate: step 2/3. The protein operates within bacterial outer membrane biogenesis; lipopolysaccharide biosynthesis. This is 2-dehydro-3-deoxyphosphooctonate aldolase from Coxiella burnetii (strain CbuG_Q212) (Coxiella burnetii (strain Q212)).